Here is a 99-residue protein sequence, read N- to C-terminus: Putative type 4B encapsulin shell protein PF1875 (99 aa).

The protein belongs to the encapsulin family. Family 4B subfamily. May self-assemble into facets and potentially into larger complexes.

The protein localises to the encapsulin nanocompartment. In terms of biological role, may be the encapsulin shell protein in a type 4 A-domain encapsulin nanocompartment system. Its cargo may be upstream glyceraldehyde-3-phosphate dehydrogenase (AC P61879). This Pyrococcus furiosus (strain ATCC 43587 / DSM 3638 / JCM 8422 / Vc1) protein is Putative type 4B encapsulin shell protein PF1875.